The chain runs to 448 residues: Phosphoglucosamine mutase (448 aa).

Ser-100 serves as the catalytic Phosphoserine intermediate. Residues Ser-100, Asp-240, Asp-242, and Asp-244 each contribute to the Mg(2+) site. At Ser-100 the chain carries Phosphoserine.

Belongs to the phosphohexose mutase family. Mg(2+) is required as a cofactor. Post-translationally, activated by phosphorylation.

The enzyme catalyses alpha-D-glucosamine 1-phosphate = D-glucosamine 6-phosphate. In terms of biological role, catalyzes the conversion of glucosamine-6-phosphate to glucosamine-1-phosphate. This Bacillus pumilus (strain SAFR-032) protein is Phosphoglucosamine mutase.